Consider the following 708-residue polypeptide: Transcriptional regulator nsrM (708 aa).

Positions 37–63 (CVRCQQRKVRCDHKSPCGNCVASDSQC) form a DNA-binding region, zn(2)-C6 fungal-type.

It is found in the nucleus. Functionally, transcriptional regulator; part of the gene cluster that mediates the biosynthesis of the tetrahydroxanthone dimer neosartorin, which exhibits antibacterial activity. The chain is Transcriptional regulator nsrM from Aspergillus novofumigatus (strain IBT 16806).